Reading from the N-terminus, the 602-residue chain is (R)-limonene synthase (602 aa).

Mg(2+)-binding residues include Asp356, Asp360, Asp500, Thr504, and Glu508. The short motif at 356 to 360 (DDVYD) is the DDXXD motif element.

This sequence belongs to the terpene synthase family. Mg(2+) serves as cofactor. Requires Mn(2+) as cofactor.

It catalyses the reaction (2E)-geranyl diphosphate = (4R)-limonene + diphosphate. Catalyzes the formation of (R)-(+)-limonene, terpinolene, (1R,5S)-(+)-camphene, (1R,5R)-(+)-alpha-pinene, beta-myrcene and traces of alpha-phellandrene. The protein is (R)-limonene synthase of Lavandula angustifolia (Lavender).